The primary structure comprises 137 residues: Phosphomevalonate dehydratase small subunit (137 aa).

The Proton acceptor role is filled by Ser-65.

This sequence belongs to the AcnX type II small subunit family. As to quaternary structure, heterodimer composed of a large subunit (PMDh-L) and a small subunit (PMDh-S).

The catalysed reaction is (R)-5-phosphomevalonate = (2E)-3-methyl-5-phosphooxypent-2-enoate + H2O. Its pathway is isoprenoid biosynthesis; isopentenyl diphosphate biosynthesis via mevalonate pathway. In terms of biological role, component of a hydro-lyase that catalyzes the dehydration of mevalonate 5-phosphate (MVA5P) to form trans-anhydromevalonate 5-phosphate (tAHMP). Involved in the archaeal mevalonate (MVA) pathway, which provides fundamental precursors for isoprenoid biosynthesis, such as isopentenyl diphosphate (IPP) and dimethylallyl diphosphate (DMAPP). This is Phosphomevalonate dehydratase small subunit from Methanococcoides burtonii (strain DSM 6242 / NBRC 107633 / OCM 468 / ACE-M).